The primary structure comprises 194 residues: Glycerol-3-phosphate acyltransferase (194 aa).

5 helical membrane-spanning segments follow: residues 2-22 (LIEI…TGLL), 51-71 (SVGI…VLAA), 80-100 (WIAL…FLGF), 112-132 (VFLG…VAVV), and 155-175 (FLSG…LVIW).

The protein belongs to the PlsY family. As to quaternary structure, probably interacts with PlsX.

It is found in the cell inner membrane. The catalysed reaction is an acyl phosphate + sn-glycerol 3-phosphate = a 1-acyl-sn-glycero-3-phosphate + phosphate. It participates in lipid metabolism; phospholipid metabolism. Catalyzes the transfer of an acyl group from acyl-phosphate (acyl-PO(4)) to glycerol-3-phosphate (G3P) to form lysophosphatidic acid (LPA). This enzyme utilizes acyl-phosphate as fatty acyl donor, but not acyl-CoA or acyl-ACP. This Geobacter metallireducens (strain ATCC 53774 / DSM 7210 / GS-15) protein is Glycerol-3-phosphate acyltransferase.